A 99-amino-acid chain; its full sequence is MYIERLLKVIKAPHVSEKSSIALDKNNVIVLKVVNYVTKQDIRHAVCMLFSVKIKKINVLMVSGKSKGQRYNLGYRCNWKKAYVILKRGYTVDLMNMEQ.

This sequence belongs to the universal ribosomal protein uL23 family. As to quaternary structure, part of the 50S ribosomal subunit. Contacts protein L29, and trigger factor when it is bound to the ribosome.

Functionally, one of the early assembly proteins it binds 23S rRNA. One of the proteins that surrounds the polypeptide exit tunnel on the outside of the ribosome. Forms the main docking site for trigger factor binding to the ribosome. The sequence is that of Large ribosomal subunit protein uL23 from Blochmanniella floridana.